Consider the following 139-residue polypeptide: Tetra-peptide repeat homeobox-like protein (139 aa).

Disordered stretches follow at residues 1-22 (MQDP…RQRQ) and 78-139 (ERWF…QQPQ). Positions 20–79 (QRQDRTIYNWKQQEVLENHFKEEQYPDYDTRQELAEMLNLREYQVQVWFKNRRAKRSRER) form a DNA-binding region, homeobox. Over residues 82–139 (QKQLQQLQKHPQQQHPQQQHPQQQLQQQQPQQQPQQQQPQQQPQQQQPQQQQLHQQPQ) the composition is skewed to low complexity.

Belongs to the paired homeobox family.

The protein resides in the nucleus. Functionally, transcription factor required for zygotic genome activation (ZGA), a critical event in early embryonic development during which the developmental control passes from maternally provided mRNAs to the expression of the zygotic genome after fertilization. Protein produced from maternal transcripts that binds and activates expression of key ZGA marker genes, such as NANOGNB, ZSCAN4, DUXB, KLF5 and DPPA3. Binds to regulatory DNA sequences containing a 5'-TAATCC-3' sequence motif. The polypeptide is Tetra-peptide repeat homeobox-like protein (Homo sapiens (Human)).